Here is a 152-residue protein sequence, read N- to C-terminus: Nucleoside diphosphate kinase B (152 aa).

Residues 1–66 (MANLERTFIA…DRPFFPGLVK (66 aa)) are interaction with AKAP13. Residues K12, F60, R88, T94, R105, and N115 each contribute to the ATP site. The active-site Pros-phosphohistidine intermediate is the H118.

This sequence belongs to the NDK family. Hexamer of two different chains: An and B (A6, A5B, A4B2, A3B3, A2B4, AB5, B6). Interacts with CAPN8. Interacts with AKAP13. Interacts with ITGB1BP1 (via C-terminal domain region). Interacts with BCL2L10. The cofactor is Mg(2+). Ubiquitously expressed.

Its subcellular location is the cytoplasm. It is found in the cell projection. It localises to the lamellipodium. The protein localises to the ruffle. The protein resides in the perinuclear region. Its subcellular location is the nucleus. The catalysed reaction is a 2'-deoxyribonucleoside 5'-diphosphate + ATP = a 2'-deoxyribonucleoside 5'-triphosphate + ADP. It catalyses the reaction a ribonucleoside 5'-diphosphate + ATP = a ribonucleoside 5'-triphosphate + ADP. The enzyme catalyses ATP + protein L-histidine = ADP + protein N-phospho-L-histidine.. Major role in the synthesis of nucleoside triphosphates other than ATP. The ATP gamma phosphate is transferred to the NDP beta phosphate via a ping-pong mechanism, using a phosphorylated active-site intermediate. Negatively regulates Rho activity by interacting with AKAP13/LBC. Acts as a transcriptional activator of the MYC gene; binds DNA non-specifically. Binds to both single-stranded guanine- and cytosine-rich strands within the nuclease hypersensitive element (NHE) III(1) region of the MYC gene promoter. Does not bind to duplex NHE III(1). Has G-quadruplex (G4) DNA-binding activity, which is independent of its nucleotide-binding and kinase activity. Binds both folded and unfolded G4 with similar low nanomolar affinities. Stabilizes folded G4s regardless of whether they are prefolded or not. Exhibits histidine protein kinase activity. The protein is Nucleoside diphosphate kinase B (NME2) of Homo sapiens (Human).